Here is a 346-residue protein sequence, read N- to C-terminus: Dehydrogenase orf1 (346 aa).

43–48 (VDYATQ) provides a ligand contact to NADP(+). 133–140 (LAFSTAIV) provides a ligand contact to substrate. NADP(+)-binding positions include 170–173 (ATSV), 193–196 (SPHN), Tyr211, and 251–252 (LN). Residue 269 to 273 (APPNV) participates in substrate binding. 336 to 337 (VS) contacts NADP(+).

This sequence belongs to the zinc-containing alcohol dehydrogenase family.

The protein operates within secondary metabolite biosynthesis. Its function is as follows. Dehydrogenase; part of the gene cluster that mediates the biosynthesis of nigerpyrone and its derivatives carbonarone A and pestalamide A. The biosynthesis pathway begins with the polyketide assembly by epaA to form phenylacetyl triketide precursor from successive condensation of two malonyl-CoA, presumably with one phenylacetyl-CoA starter unit produced by the phenylacetyl-CoA ligase epaB. For the nigerpyrone biosynthesis, the reactive polyketide chain is released as an aldehyde through the R-domain. A nonenzymatic cyclization and dehydration may create nigerpyrone. For the biosynthesis of carbonarone A and pestalamide A, an extra methyl group is added through the C-methyltransferase domain. Several further steps involving the dehydrogenase orf1, the cytochrome P450 monooxygenase orf2 and the FAD-dependent monooxygenase orf3 are required to form a carbonarone A precursor which is converted to carbonarone A via cyclization. The O-acetyltransferase epaC could catalyze the transfer of 2-methylsuccinyl-CoA, a common intermediate in the ethylmalonyl-CoA pathway, to generate the final product pestalamide A. This is Dehydrogenase orf1 from Aspergillus niger (strain ATCC MYA-4892 / CBS 513.88 / FGSC A1513).